The primary structure comprises 446 residues: Bifunctional protein GlmU (446 aa).

Positions 1–228 are pyrophosphorylase; that stretch reads MTKTAAVILA…AEELLGVNSR (228 aa). UDP-N-acetyl-alpha-D-glucosamine contacts are provided by residues 9–12, Lys23, Gln72, 77–78, 100–102, Gly140, Glu154, Asn169, and Asn226; these read LAAG, GT, and YGD. Asp102 lines the Mg(2+) pocket. Residue Asn226 coordinates Mg(2+). Residues 229 to 249 form a linker region; it reads SELAAAEAVIQGRLREKAMEG. The interval 250 to 446 is N-acetyltransferase; that stretch reads GATLTAPETV…AHMRRLTGKN (197 aa). Arg315 and Lys333 together coordinate UDP-N-acetyl-alpha-D-glucosamine. His345 (proton acceptor) is an active-site residue. Residues Tyr348 and Asn359 each coordinate UDP-N-acetyl-alpha-D-glucosamine. Acetyl-CoA-binding positions include Ala362, 368–369, Ser387, Ala405, and Arg422; that span reads NY.

The protein in the N-terminal section; belongs to the N-acetylglucosamine-1-phosphate uridyltransferase family. In the C-terminal section; belongs to the transferase hexapeptide repeat family. In terms of assembly, homotrimer. The cofactor is Mg(2+).

It is found in the cytoplasm. The catalysed reaction is alpha-D-glucosamine 1-phosphate + acetyl-CoA = N-acetyl-alpha-D-glucosamine 1-phosphate + CoA + H(+). It catalyses the reaction N-acetyl-alpha-D-glucosamine 1-phosphate + UTP + H(+) = UDP-N-acetyl-alpha-D-glucosamine + diphosphate. The protein operates within nucleotide-sugar biosynthesis; UDP-N-acetyl-alpha-D-glucosamine biosynthesis; N-acetyl-alpha-D-glucosamine 1-phosphate from alpha-D-glucosamine 6-phosphate (route II): step 2/2. It functions in the pathway nucleotide-sugar biosynthesis; UDP-N-acetyl-alpha-D-glucosamine biosynthesis; UDP-N-acetyl-alpha-D-glucosamine from N-acetyl-alpha-D-glucosamine 1-phosphate: step 1/1. It participates in bacterial outer membrane biogenesis; LPS lipid A biosynthesis. Catalyzes the last two sequential reactions in the de novo biosynthetic pathway for UDP-N-acetylglucosamine (UDP-GlcNAc). The C-terminal domain catalyzes the transfer of acetyl group from acetyl coenzyme A to glucosamine-1-phosphate (GlcN-1-P) to produce N-acetylglucosamine-1-phosphate (GlcNAc-1-P), which is converted into UDP-GlcNAc by the transfer of uridine 5-monophosphate (from uridine 5-triphosphate), a reaction catalyzed by the N-terminal domain. The chain is Bifunctional protein GlmU from Rhodospirillum rubrum (strain ATCC 11170 / ATH 1.1.1 / DSM 467 / LMG 4362 / NCIMB 8255 / S1).